Reading from the N-terminus, the 514-residue chain is Cytochrome P450 71AP13 (514 aa).

A helical membrane pass occupies residues 20–37; the sequence is HSSLFAFSLLILLLKFIY. 2 N-linked (GlcNAc...) asparagine glycosylation sites follow: asparagine 127 and asparagine 184. Cysteine 455 serves as a coordination point for heme.

This sequence belongs to the cytochrome P450 family. Heme serves as cofactor. Expressed in fruit kernel, seedlings, leaves and stems.

Its subcellular location is the membrane. The sequence is that of Cytochrome P450 71AP13 from Prunus mume (Japanese apricot).